The primary structure comprises 102 residues: Large ribosomal subunit protein bL21 (102 aa).

Belongs to the bacterial ribosomal protein bL21 family. Part of the 50S ribosomal subunit. Contacts protein L20.

In terms of biological role, this protein binds to 23S rRNA in the presence of protein L20. This Geobacillus thermodenitrificans (strain NG80-2) protein is Large ribosomal subunit protein bL21.